Here is a 269-residue protein sequence, read N- to C-terminus: Formamidopyrimidine-DNA glycosylase (269 aa).

The active-site Schiff-base intermediate with DNA is the Pro-2. Catalysis depends on Glu-3, which acts as the Proton donor. Catalysis depends on Lys-57, which acts as the Proton donor; for beta-elimination activity. Residues His-90, Arg-109, and Lys-150 each contribute to the DNA site. The FPG-type zinc finger occupies 235-269; the sequence is QVYGRKGEPCRVCGTPIVATKHAQRATFYCRHCQK. Arg-259 (proton donor; for delta-elimination activity) is an active-site residue.

Belongs to the FPG family. As to quaternary structure, monomer. Zn(2+) is required as a cofactor.

It carries out the reaction Hydrolysis of DNA containing ring-opened 7-methylguanine residues, releasing 2,6-diamino-4-hydroxy-5-(N-methyl)formamidopyrimidine.. The enzyme catalyses 2'-deoxyribonucleotide-(2'-deoxyribose 5'-phosphate)-2'-deoxyribonucleotide-DNA = a 3'-end 2'-deoxyribonucleotide-(2,3-dehydro-2,3-deoxyribose 5'-phosphate)-DNA + a 5'-end 5'-phospho-2'-deoxyribonucleoside-DNA + H(+). Its function is as follows. Involved in base excision repair of DNA damaged by oxidation or by mutagenic agents. Acts as a DNA glycosylase that recognizes and removes damaged bases. Has a preference for oxidized purines, such as 7,8-dihydro-8-oxoguanine (8-oxoG). Has AP (apurinic/apyrimidinic) lyase activity and introduces nicks in the DNA strand. Cleaves the DNA backbone by beta-delta elimination to generate a single-strand break at the site of the removed base with both 3'- and 5'-phosphates. The sequence is that of Formamidopyrimidine-DNA glycosylase from Salmonella choleraesuis (strain SC-B67).